The chain runs to 219 residues: Uracil-DNA glycosylase (219 aa).

Asp61 acts as the Proton acceptor in catalysis.

Belongs to the uracil-DNA glycosylase (UDG) superfamily. UNG family.

Its subcellular location is the cytoplasm. It carries out the reaction Hydrolyzes single-stranded DNA or mismatched double-stranded DNA and polynucleotides, releasing free uracil.. In terms of biological role, excises uracil residues from the DNA which can arise as a result of misincorporation of dUMP residues by DNA polymerase or due to deamination of cytosine. The polypeptide is Uracil-DNA glycosylase (Neisseria meningitidis serogroup A / serotype 4A (strain DSM 15465 / Z2491)).